Here is a 670-residue protein sequence, read N- to C-terminus: Major fimbrium tip subunit FimD (670 aa).

The signal sequence occupies residues 1 to 24 (MRTNRILNIICPPILFLLVGFLFG). Cysteine 25 carries N-palmitoyl cysteine lipidation. Residue cysteine 25 is the site of S-diacylglycerol cysteine attachment. A propeptide spanning residues 25–50 (CVREDIESDMNETSSLFLQVQPYNQR) is cleaved from the precursor.

It belongs to the FimD family. In terms of assembly, fimbriae are composed of a major, structural subunit and the minor components FimC, FimD and FimE. Identified in a complex composed of FimC, FimD and FimE (in vitro). The complex interacts with host extracellular matrix proteins, including fibronectin and type I collagen. Interacts with host CXCR4.

The protein resides in the fimbrium. It is found in the cell outer membrane. In terms of biological role, probably a component of the fimbrium tip. These long, filamentous pili are attached to the cell surface; they mediate biofilm formation, adhesion onto host cells and onto other bacteria that are part of the oral microbiome. They play an important role in invasion of periodontal tissues and are major virulence factors. FimC, FimD and FimE contribute to interaction with host CXCR4 and thereby down-regulate the TLR2-mediated host immune response. This is Major fimbrium tip subunit FimD from Porphyromonas gingivalis (strain ATCC 33277 / DSM 20709 / CIP 103683 / JCM 12257 / NCTC 11834 / 2561).